The sequence spans 234 residues: Alpha N-terminal protein methyltransferase 1 (234 aa).

S-adenosyl-L-methionine contacts are provided by residues G71, R76, 93–95 (DVV), 120–121 (LQ), and Q136.

The protein belongs to the methyltransferase superfamily. NTM1 family. Expressed in uterine cells and PVT neurons of the tail. Expressed in pharynx, intestine and DVB tail neuron.

The enzyme catalyses N-terminal L-alanyl-L-prolyl-L-lysyl-[protein] + 3 S-adenosyl-L-methionine = N-terminal N,N,N-trimethyl-L-alanyl-L-prolyl-L-lysyl-[protein] + 3 S-adenosyl-L-homocysteine + 3 H(+). It carries out the reaction N-terminal L-seryl-L-prolyl-L-lysyl-[protein] + 3 S-adenosyl-L-methionine = N-terminal N,N,N-trimethyl-L-seryl-L-prolyl-L-lysyl-[protein] + 3 S-adenosyl-L-homocysteine + 3 H(+). The catalysed reaction is N-terminal L-prolyl-L-prolyl-L-lysyl-[protein] + 2 S-adenosyl-L-methionine = N-terminal N,N-dimethyl-L-prolyl-L-prolyl-L-lysyl-[protein] + 2 S-adenosyl-L-homocysteine + 2 H(+). Functionally, alpha-N-methyltransferase that methylates the N-terminus of target proteins containing the N-terminal motif [Ala/Pro/Ser]-Pro-Lys when the initiator Met is cleaved. Specifically catalyzes mono-, di- or tri-methylation of exposed alpha-amino group of Ala or Ser residue in the [Ala/Ser]-Pro-Lys motif and mono- or di-methylation of Pro in the Pro-Pro-Lys motif. Probably required for the synthesis of neurotransmitter melatonin from serotonin, which plays a role in promoting a sleep-like state, called lethargus, during larval development. The sequence is that of Alpha N-terminal protein methyltransferase 1 from Caenorhabditis elegans.